The chain runs to 336 residues: uncharacterized protein (336 aa).

An N-terminal signal peptide occupies residues 1–33 (MGSAWPAEIRKIAKISKRLLGATVILGFGVAEA).

This is an uncharacterized protein from Sinorhizobium fredii (strain NBRC 101917 / NGR234).